The chain runs to 95 residues: PIK3R3 upstream open reading frame protein (95 aa).

Residues 1 to 27 (MGPSRLVRGPRPQGMRSPYRRPGMGWP) are disordered.

The sequence is that of PIK3R3 upstream open reading frame protein from Homo sapiens (Human).